We begin with the raw amino-acid sequence, 213 residues long: Protein RCR1 (213 aa).

Residues 1–39 (MGLISYENEAINEVKKADNHHVSKFVTSYYGPSSSSWQS) are Lumenal-facing. Residues 40-62 (GIWILFVLFVAAVILIILFTFVA) traverse the membrane as a helical segment. Topologically, residues 63–213 (NRRRRRMGRA…PERAKVNARS (151 aa)) are cytoplasmic. A PY motif motif is present at residues 104–107 (VPEY). The tract at residues 190-213 (ERLPGGTTTQEINPPERAKVNARS) is disordered. Basic and acidic residues predominate over residues 203-213 (PPERAKVNARS).

In terms of assembly, interacts with PMT4 and WW domain of RSP5.

It is found in the endoplasmic reticulum membrane. In terms of biological role, regulates chitin deposition in the cell wall. The sequence is that of Protein RCR1 (RCR1) from Saccharomyces cerevisiae (strain ATCC 204508 / S288c) (Baker's yeast).